A 655-amino-acid polypeptide reads, in one-letter code: p-hydroxybenzoic acid efflux pump subunit AaeB (655 aa).

Transmembrane regions (helical) follow at residues 13-33, 38-58, 69-89, 93-113, 121-141, 152-172, 370-390, 407-427, 431-451, 459-479, and 482-502; these read FAVK…HFQL, WAVL…GGEP, LRII…IAMI, LLMI…SSLV, WGLA…EPLL, EIVI…PRSI, LFWL…IAVV, FIYG…VIIP, QSML…GIEV, MGAL…TFHF, and FLDS…VILL.

This sequence belongs to the aromatic acid exporter ArAE (TC 2.A.85) family.

It localises to the cell inner membrane. Functionally, forms an efflux pump with AaeA. Could function as a metabolic relief valve, allowing to eliminate certain compounds when they accumulate to high levels in the cell. This is p-hydroxybenzoic acid efflux pump subunit AaeB from Escherichia coli O81 (strain ED1a).